Consider the following 132-residue polypeptide: Large ribosomal subunit protein bL19 (132 aa).

Belongs to the bacterial ribosomal protein bL19 family.

This protein is located at the 30S-50S ribosomal subunit interface and may play a role in the structure and function of the aminoacyl-tRNA binding site. This Methylobacterium radiotolerans (strain ATCC 27329 / DSM 1819 / JCM 2831 / NBRC 15690 / NCIMB 10815 / 0-1) protein is Large ribosomal subunit protein bL19.